A 673-amino-acid chain; its full sequence is Vasorin (673 aa).

The signal sequence occupies residues 1–23 (MCSRVPLLLPLLLLLALGPGVQG). One can recognise an LRRNT domain in the interval 24-51 (CPSGCQCSQPQTVFCTARQGTTVPRDVP). The Extracellular portion of the chain corresponds to 24 to 575 (CPSGCQCSQP…VTQAREGNLP (552 aa)). LRR repeat units follow at residues 52 to 74 (PDTV…SFAG), 77 to 98 (GLQL…VFQP), 101 to 122 (NLSN…TFRG), 125 to 146 (RLER…AFDT), 149 to 170 (RLLE…RLPR), 171 to 191 (LLLL…ILDT), 193 to 214 (NVEA…LFSR), 217 to 238 (NLHD…IRGL), 240 to 262 (GLTR…DLAG), and 265 to 287 (ALQE…SGLF). Asn101 is a glycosylation site (N-linked (GlcNAc...) asparagine). Asn117 carries N-linked (GlcNAc...) (complex) asparagine glycosylation. An N-linked (GlcNAc...) asparagine glycan is attached at Asn273. An LRRCT domain is found at 298-351 (NPFNCVCPLSWFGPWVRESHVTLASPEETRCHFPPKNAGRLLLELDYADFGCPA). The segment covering 358–370 (VPTTRPVVREPTA) has biased composition (low complexity). Residues 358–404 (VPTTRPVVREPTALSSSLAPTWLSPTEPATEAPSPPSTAPPTVGPVP) are disordered. Positions 390-404 (PSPPSTAPPTVGPVP) are enriched in pro residues. The EGF-like domain maps to 405–442 (QPQDCPPSTCLNGGTCHLGTRHHLACLCPEGFTGLYCE). Cystine bridges form between Cys409-Cys420, Cys414-Cys430, and Cys432-Cys441. Positions 460–558 (PPRSLTLGIE…ACGEAHTPPA (99 aa)) constitute a Fibronectin type-III domain. Residues Asn500 and Asn528 are each glycosylated (N-linked (GlcNAc...) asparagine). The helical transmembrane segment at 576-596 (LLIAPALAAVLLAALAAVGAA) threads the bilayer. The Cytoplasmic segment spans residues 597 to 673 (YCVRRGRAMA…QSPLHAKPYI (77 aa)).

In terms of assembly, interacts with TGFB1, TGFB2 and TGFB3. N-glycosylated. N-glycan heterogeneity at Asn-117: Hex5HexNAc4 (minor), dHex1Hex5HexNAc4 (major), Hex6HexNAc5 (minor) and dHex1Hex6HexNAc5 (minor). As to expression, expressed at highest levels in aorta, at intermediate levels in kidney and placenta and at lowest levels in brain, heart, liver, lung and skeletal muscle. Within the aorta, the strongest expression is found in the tunica media of the proximal ascending aorta, the descending thoracic aorta, the abdominal aorta and the coronary arteries. Within the kidney, expression is found in the interstitial cells.

The protein localises to the membrane. It is found in the secreted. Functionally, may act as an inhibitor of TGF-beta signaling. This chain is Vasorin (VASN), found in Homo sapiens (Human).